The primary structure comprises 596 residues: (E)-beta-ocimene synthase, chloroplastic (596 aa).

The transit peptide at 1-35 (MAITHYQMASFQSSFHFCMLRKTLRQKSSLHFAKR) directs the protein to the chloroplast. Positions 307, 344, 348, 485, and 488 each coordinate (2E)-geranyl diphosphate. Residues Asp-344 and Asp-348 each coordinate Mg(2+). The DDXXD motif signature appears at 344–348 (DDIYD). Mg(2+) is bound by residues Asn-488, Ala-492, and Glu-496.

The protein belongs to the terpene synthase family. Tpsb subfamily. Mg(2+) is required as a cofactor. Mn(2+) serves as cofactor. As to expression, highly expressed in leaves, stems and disk florets. Detected in roots.

Its subcellular location is the plastid. It localises to the chloroplast. The catalysed reaction is (2E)-geranyl diphosphate = (E)-beta-ocimene + diphosphate. Its pathway is secondary metabolite biosynthesis; terpenoid biosynthesis. Its function is as follows. Monoterpene synthase involved in the biosynthesis of (E)-beta-ocimene as the major product and trace amounts of (Z)-beta-ocimene. Can only accept geranyl diphosphate as substrate. This Matricaria chamomilla var. recutita (German chamomile) protein is (E)-beta-ocimene synthase, chloroplastic.